The following is a 312-amino-acid chain: MTAWRVVFMGTPDFATGTLQALLDGPDTVVAVFTQPDKPVGRGMKMQKTPVKQLAEQHGIPVYQPNRLREAEAVTALRALRPDVVVVVAYGQILSREVLEIPTHGCINVHASLLPRWRGAAPIQRAILAGDAQSGVTIMAMEEGLDTGPMYSTVVQSIDNHTTGGQLHDQLMAAGGGLLVETLARIKHEGLTPQIQPEQGVTYAAKLKKEEGLVDWSQPAIQIQRAVQAFDPWPCAFTLWQGKPLKLFAASVVVGHGTPGEVIEVEKDGFVVACGDGALRVAQVQAAGKKRMSSGEWLRGHGVKQGERLGEG.

112–115 (SLLP) is a (6S)-5,6,7,8-tetrahydrofolate binding site.

It belongs to the Fmt family.

It catalyses the reaction L-methionyl-tRNA(fMet) + (6R)-10-formyltetrahydrofolate = N-formyl-L-methionyl-tRNA(fMet) + (6S)-5,6,7,8-tetrahydrofolate + H(+). Functionally, attaches a formyl group to the free amino group of methionyl-tRNA(fMet). The formyl group appears to play a dual role in the initiator identity of N-formylmethionyl-tRNA by promoting its recognition by IF2 and preventing the misappropriation of this tRNA by the elongation apparatus. In Magnetococcus marinus (strain ATCC BAA-1437 / JCM 17883 / MC-1), this protein is Methionyl-tRNA formyltransferase.